The chain runs to 3477 residues: Abnormal spindle-like microcephaly-associated protein homolog (3477 aa).

The disordered stretch occupies residues 1 to 34 (MANRRVGRGCWEVSPTERRPPAGLRGPATEEEAS). Phosphoserine is present on residues Ser283, Ser367, Ser392, and Ser425. Over residues 417-433 (NENSQVPQSPQDWSKSE) the composition is skewed to polar residues. Disordered regions lie at residues 417 to 436 (NENSQVPQSPQDWSKSEVSP) and 563 to 583 (MPSSTTASVARKRKSDESMED). Phosphoserine is present on Ser605. The region spanning 920 to 1056 (KASKEILLAF…LLWKIAFAFQ (137 aa)) is the Calponin-homology (CH) 1 domain. Positions 1057–1076 (VDISLNLDQLKEEIAFLKHT) form a coiled coil. Residue Ser1103 is modified to Phosphoserine. Residues 1110-1261 (SENIKLLMDW…YLSFLCARLL (152 aa)) form the Calponin-homology (CH) 2 domain. IQ domains follow at residues 1347-1378 (QNKAASLIQGYWRRYSTRKRFLKLKYYSIILQ), 1393-1422 (YLWATVTIQRHWRAYLRRKQDQQRYEMLKS), 1582-1613 (LKKTIIKFQAHIRKHQQLQKYKKMKKAAVIIQ), 1605-1634 (MKKAAVIIQTHFRAYIFARKVLASYQKTRS), 1632-1661 (TRSAVIVLQSAYRGMQARKMYIHILTSVIK), 1655-1684 (ILTSVIKIQSYYRAYVSKKEFLSLKNATIK), 1728-1757 (MRESCIKLQAFVRGYLVRKQMRLQRKAVIS), 1751-1782 (QRKAVISLQSYFRMRKARQYYLKMYKAIIVIQ), 1801-1830 (VKKAATCLQAAYRGYKIRQLIKQQSIAAVK), 1824-1853 (QSIAAVKIQSAFRGYNKRVKYQSVLQSIIK), 1874-1903 (TKAAVVSLQSAYRGWKVRKQIRREHQAALK), 1897-1928 (EHQAALKIQSAFRMAKAQKQFRLFKTAALVIQ), 1947-1978 (LRHAVLILQSMWKGKTLRRQLQRQHKCAIIIQ), 1970-2001 (QHKCAIIIQSYYRMHVQQKKWKIMKKAALLIQ), 2020-2049 (TKAAVVTLQSAYRGMKVRKRIKDCNKAAVT), 2043-2074 (CNKAAVTIQSKYRAYKTKKKYATYRASAIIIQ), 2093-2124 (LKKTAIKIQSVYRGIRVRRHIQHMHRAATYIK), 2116-2147 (MHRAATYIKAMFKMHQSRISYHTMRKAAIVIQ), 2239-2270 (LRHSVIYIQAIFRGKKARRHLKMMHVAATLIQ), 2262-2293 (MHVAATLIQRRFRTLMMRRRFLSLKKTAVWIQ), 2311-2342 (VQNAVIKIQSSYRRWMIRKKMREMHRAATFIQ), 2334-2365 (MHRAATFIQATFRMQRVHMRYQALKQASVVIQ), 2384-2415 (QRHSAVILQAAFRGMKTRRHLKSMHSSATLIQ), 2407-2438 (MHSSATLIQSRFRSLLVRRRFISLKKATIFVQ), 2457-2488 (LRKAAITVQSSYRRLMVKKKLQEMQRAAVLIQ), 2480-2511 (MQRAAVLIQATFRMHRTYVTFQTWKQASILIQ), 2530-2561 (QWHSAVVIQAAYKGMKARQHLREKHKAAIIIQ), 2624-2653 (QHQAAIIIQKHCKAFKIRKHYLHLRATVVS), 2665-2696 (RTQAVICIQSYYRGFKVRRDIQNMHRAATLIQ), 2688-2719 (MHRAATLIQSFYRMHRAKVDYQTKKTAIVVIQ), 2738-2767 (VQKSVRTIQAAFRGMKVRQKLKNISEEKMA), 2814-2845 (QSRAAVTIQKAFRRMVTRKVETQKCAALRIQF), 2859-2890 (QKRAAITLQHYFRTWQTRKQFLLYRKAAVVLQ), 2909-2938 (IRSSVIIIQARSKGFIQKRKFQEIKNSTIK), 2932-2963 (IKNSTIKIQAMWRRYRAKKYLCKVKAACKIQA), 2954-2985 (KVKAACKIQAWYRCWRAHKEYLAILKAVKIIQ), 3029-3060 (RHRAACLIQAHYRGYKERQVFLRQKSAALIIQ), 3079-3110 (FKKSTVILQALVRGWLVRKRILEQRTKIRLLH), and 3204-3235 (FTSGIIKIQALWRGYSWRKKNDCTKIKAIRLS).

The protein resides in the cytoplasm. It is found in the cytoskeleton. It localises to the spindle. The protein localises to the nucleus. Probable role in mitotic spindle regulation and coordination of mitotic processes. May have a preferential role in regulating neurogenesis. The chain is Abnormal spindle-like microcephaly-associated protein homolog (ASPM) from Colobus guereza (Mantled guereza).